An 814-amino-acid chain; its full sequence is Threonine--tRNA ligase 2, cytoplasmic (814 aa).

The stretch at 2-72 (AAHIAQRLTV…SLREEQERAR (71 aa)) forms a coiled coil. Positions 62–142 (RSLREEQERA…GHKQEGPCAP (81 aa)) are disordered. Basic and acidic residues-rich tracts occupy residues 63 to 72 (SLREEQERAR), 88 to 102 (EEPK…EKGQ), and 119 to 137 (GNKK…HKQE). The TGS domain maps to 172-234 (KPIKITLADG…EQDSNVELLK (63 aa)). Residues 798 to 804 (KLKTLKK) carry the Nuclear localization signal motif.

The protein belongs to the class-II aminoacyl-tRNA synthetase family.

The protein resides in the cytoplasm. The protein localises to the nucleus. It carries out the reaction tRNA(Thr) + L-threonine + ATP = L-threonyl-tRNA(Thr) + AMP + diphosphate + H(+). Its function is as follows. Catalyzes the attachment of threonine to tRNA(Thr) in a two-step reaction: threonine is first activated by ATP to form Thr-AMP and then transferred to the acceptor end of tRNA(Thr). Also edits incorrectly charged tRNA(Thr) via its editing domain, at the post-transfer stage. This chain is Threonine--tRNA ligase 2, cytoplasmic (tars3), found in Xenopus tropicalis (Western clawed frog).